Here is an 862-residue protein sequence, read N- to C-terminus: DNA mismatch repair protein MutS (862 aa).

608 to 615 (GPNMAGKS) serves as a coordination point for ATP.

The protein belongs to the DNA mismatch repair MutS family.

This protein is involved in the repair of mismatches in DNA. It is possible that it carries out the mismatch recognition step. This protein has a weak ATPase activity. The protein is DNA mismatch repair protein MutS of Bacteroides thetaiotaomicron (strain ATCC 29148 / DSM 2079 / JCM 5827 / CCUG 10774 / NCTC 10582 / VPI-5482 / E50).